The sequence spans 1279 residues: ATP-dependent helicase/nuclease subunit A (1279 aa).

In terms of domain architecture, UvrD-like helicase ATP-binding spans 4–499 (TKWTDEQRQA…VKLFKNFRSR (496 aa)). 25–32 (AGAGAGKT) serves as a coordination point for ATP. The 328-residue stretch at 526-853 (EEALKVGASY…RIMSIHKSKG (328 aa)) folds into the UvrD-like helicase C-terminal domain.

This sequence belongs to the helicase family. AddA subfamily. As to quaternary structure, heterodimer of AddA and AddB/RexB. Requires Mg(2+) as cofactor.

It carries out the reaction Couples ATP hydrolysis with the unwinding of duplex DNA by translocating in the 3'-5' direction.. It catalyses the reaction ATP + H2O = ADP + phosphate + H(+). Its function is as follows. The heterodimer acts as both an ATP-dependent DNA helicase and an ATP-dependent, dual-direction single-stranded exonuclease. Recognizes the chi site generating a DNA molecule suitable for the initiation of homologous recombination. The AddA nuclease domain is required for chi fragment generation; this subunit has the helicase and 3' -&gt; 5' nuclease activities. The sequence is that of ATP-dependent helicase/nuclease subunit A from Clostridium botulinum (strain ATCC 19397 / Type A).